We begin with the raw amino-acid sequence, 180 residues long: E1B protein, small T-antigen (180 aa).

The tract at residues 142 to 180 is disordered; sequence GPAAPLARQGSQQEEQQQRQEEEQVQEEMRSGLDPPTEN. Basic and acidic residues predominate over residues 157–172; it reads QQQRQEEEQVQEEMRS.

This sequence belongs to the adenoviridae E1B 19 kDa protein family.

The protein is E1B protein, small T-antigen of Simian adenovirus serotype 7 (SAdV-7).